The primary structure comprises 178 residues: Neuroblastoma suppressor of tumorigenicity 1 (178 aa).

The signal sequence occupies residues 1–16 (MLWVLVGTVLPVMLLA). 5 disulfides stabilise this stretch: Cys-34/Cys-84, Cys-48/Cys-98, Cys-58/Cys-117, Cys-62/Cys-119, and Cys-81/Cys-122. The CTCK domain occupies 34 to 123 (CEAKNITQIV…IVHCSCQACG (90 aa)). Positions 130-178 (GLNVYMQGEDGPGSQPGSHSHSHPHPGCQTPEPEEPPGAPQVEEEGAED) are disordered.

The protein belongs to the DAN family. As to quaternary structure, homodimer. In terms of tissue distribution, most abundant in lung, brain, intestine and kidney.

It localises to the secreted. Its function is as follows. Possible candidate as a tumor suppressor gene of neuroblastoma. May play an important role in preventing cells from entering the final stage (G1/S) of the transformation process. The chain is Neuroblastoma suppressor of tumorigenicity 1 (Nbl1) from Rattus norvegicus (Rat).